A 255-amino-acid polypeptide reads, in one-letter code: Complement C1q-like protein 3 (255 aa).

A signal peptide spans 1-20; the sequence is MVLLLVILIPVLVSSAGTSA. The tract at residues 39–109 is disordered; that stretch reads KAPSTAATPD…GLPGPPGAPG (71 aa). The Collagen-like domain maps to 61–111; the sequence is GPKGEAGRPGKAGPRGPPGEPGPPGPVGPPGEKGEPGRQGLPGPPGAPGLN. Over residues 75–89 the composition is skewed to pro residues; it reads RGPPGEPGPPGPVGP. A C1q domain is found at 122–255; the sequence is STVPKIAFYA…TFSGFIIYAD (134 aa).

Forms homooligomers. Interacts with ADGRB3. Forms heterooligomers with C1QL2 and C1QL4, when proteins are coexpressed; this interaction does not occur after secretion. As to expression, highly expressed in brain and white adipose tissue. In gonadal fat pad, expressed at lower levels in adipocytes than in the stromal vascular fraction (VSP), which contains preadipocytes, fibroblasts, endothelial cells and occasional immune cells. Expression exhibits sexually dimorphism, with higher levels in females than in males (at protein level). Tends to be up-regulated in adipose tissue from obese males, but not females. Expressed in glial cells.

It localises to the secreted. May regulate the number of excitatory synapses that are formed on hippocampus neurons. Has no effect on inhibitory synapses. Plays a role in glucose homeostasis. Via AMPK signaling pathway, stimulates glucose uptake in adipocytes, myotubes and hepatocytes and enhances insulin-stimulated glucose uptake. In a hepatoma cell line, reduces the expression of gluconeogenic enzymes G6PC1 and PCK1 and hence decreases de novo glucose production. This chain is Complement C1q-like protein 3 (C1ql3), found in Mus musculus (Mouse).